Here is a 91-residue protein sequence, read N- to C-terminus: MPRSIKKGPFIDEHLDRKVQSAQASNSRRPIKTWSRRSTITPDFIGLTISVHNGRQHIPVVVNENMVGHKLGEFALTRTFKGHVADKKAKR.

The tract at residues 1 to 32 is disordered; sequence MPRSIKKGPFIDEHLDRKVQSAQASNSRRPIK. Residues 9 to 19 show a composition bias toward basic and acidic residues; that stretch reads PFIDEHLDRKV.

This sequence belongs to the universal ribosomal protein uS19 family.

Its function is as follows. Protein S19 forms a complex with S13 that binds strongly to the 16S ribosomal RNA. The protein is Small ribosomal subunit protein uS19 of Acidithiobacillus ferrooxidans (strain ATCC 53993 / BNL-5-31) (Leptospirillum ferrooxidans (ATCC 53993)).